Consider the following 159-residue polypeptide: Large ribosomal subunit protein uL11 (159 aa).

Residues 137 to 149 (EGKDPREVQREVD) are compositionally biased toward basic and acidic residues. A disordered region spans residues 137–159 (EGKDPREVQREVDSGAWDKLLGG).

The protein belongs to the universal ribosomal protein uL11 family. In terms of assembly, part of the ribosomal stalk of the 50S ribosomal subunit. Interacts with L10 and the large rRNA to form the base of the stalk. L10 forms an elongated spine to which L12 dimers bind in a sequential fashion forming a multimeric L10(L12)X complex.

Its function is as follows. Forms part of the ribosomal stalk which helps the ribosome interact with GTP-bound translation factors. The protein is Large ribosomal subunit protein uL11 of Korarchaeum cryptofilum (strain OPF8).